Reading from the N-terminus, the 1218-residue chain is MRSPRTRGRPGRPLSLLLALLCALRAKVCGASGQFELEILSMQNVNGELQNGNCCGGVRNPGDRKCTRDECDTYFKVCLKEYQSRVTAGGPCSFGSGSTPVIGGNTFNLKASRGNDRNRIVLPFSFAWPRSYTLLVEAWDSSNDTIQPDSIIEKASHSGMINPSRQWQTLKQNTGIAHFEYQIRVTCDDHYYGFGCNKFCRPRDDFFGHYACDQNGNKTCMEGWMGPDCNKAICRQGCSPKHGSCKLPGDCRCQYGWQGLYCDKCIPHPGCVHGTCNEPWQCLCETNWGGQLCDKDLNYCGTHQPCLNRGTCSNTGPDKYQCSCPEGYSGPNCEIAEHACLSDPCHNRGSCKETSSGFECECSPGWTGPTCSTNIDDCSPNNCSHGGTCQDLVNGFKCVCPPQWTGKTCQLDANECEAKPCVNARSCKNLIASYYCDCLPGWMGQNCDININDCLGQCQNDASCRDLVNGYRCICPPGYAGDHCERDIDECASNPCLNGGHCQNEINRFQCLCPTGFSGNLCQLDIDYCEPNPCQNGAQCYNRASDYFCKCPEDYEGKNCSHLKDHCRTTTCEVIDSCTVAMASNDTPEGVRYISSNVCGPHGKCKSQSGGKFTCDCNKGFTGTYCHENINDCESNPCKNGGTCIDGVNSYKCICSDGWEGAHCENNINDCSQNPCHYGGTCRDLVNDFYCDCKNGWKGKTCHSRDSQCDEATCNNGGTCYDEVDTFKCMCPGGWEGTTCNIARNSSCLPNPCHNGGTCVVNGDSFTCVCKEGWEGPICTQNTNDCSPHPCYNSGTCVDGDNWYRCECAPGFAGPDCRININECQSSPCAFGATCVDEINGYQCICPPGHSGAKCHEVSGRSCITMGRVILDGAKWDDDCNTCQCLNGRVACSKVWCGPRPCRLHKSHNECPSGQSCIPVLDDQCFVRPCTGVGECRSSSLQPVKTKCTSDSYYQDNCANITFTFNKEMMSPGLTTEHICSELRNLNILKNVSAEYSIYIACEPSLSANNEIHVAISAEDIRDDGNPVKEITDKIIDLVSKRDGNSSLIAAVAEVRVQRRPLKNRTDFLVPLLSSVLTVAWVCCLVTAFYWCVRKRRKPSSHTHSAPEDNTTNNVREQLNQIKNPIEKHGANTVPIKDYENKNSKMSKIRTHNSEVEEDDMDKHQQKVRFAKQPVYTLVDREEKAPSGTPTKHPNWTNKQDNRDLESAQSLNRMEYIV.

An N-terminal signal peptide occupies residues 1 to 33; it reads MRSPRTRGRPGRPLSLLLALLCALRAKVCGASG. Topologically, residues 34–1067 are extracellular; it reads QFELEILSMQ…QRRPLKNRTD (1034 aa). N-linked (GlcNAc...) asparagine glycosylation is present at Asn-143. One can recognise a DSL domain in the interval 185 to 229; it reads VTCDDHYYGFGCNKFCRPRDDFFGHYACDQNGNKTCMEGWMGPDC. Disulfide bonds link Cys-187–Cys-196 and Cys-200–Cys-212. The tract at residues 199–207 is important for interaction with NOTCH1; sequence FCRPRDDFF. Asn-217 carries an N-linked (GlcNAc...) asparagine glycan. 40 cysteine pairs are disulfide-bonded: Cys-220-Cys-229, Cys-234-Cys-245, Cys-238-Cys-251, Cys-253-Cys-262, Cys-265-Cys-276, Cys-271-Cys-282, Cys-284-Cys-293, Cys-300-Cys-312, Cys-306-Cys-322, Cys-324-Cys-333, Cys-340-Cys-351, Cys-345-Cys-360, Cys-362-Cys-371, Cys-378-Cys-389, Cys-383-Cys-398, Cys-400-Cys-409, Cys-416-Cys-427, Cys-421-Cys-436, Cys-438-Cys-447, Cys-454-Cys-464, Cys-458-Cys-473, Cys-475-Cys-484, Cys-491-Cys-502, Cys-496-Cys-511, Cys-513-Cys-522, Cys-529-Cys-540, Cys-534-Cys-549, Cys-551-Cys-560, Cys-578-Cys-605, Cys-599-Cys-615, Cys-617-Cys-626, Cys-633-Cys-644, Cys-638-Cys-653, Cys-655-Cys-664, Cys-671-Cys-682, Cys-676-Cys-691, Cys-693-Cys-702, Cys-709-Cys-720, Cys-714-Cys-729, and Cys-731-Cys-740. Positions 230 to 263 constitute an EGF-like 1 domain; that stretch reads NKAICRQGCSPKHGSCKLPGDCRCQYGWQGLYCD. In terms of domain architecture, EGF-like 2; atypical spans 264 to 294; the sequence is KCIPHPGCVHGTCNEPWQCLCETNWGGQLCD. EGF-like domains are found at residues 296-334 and 336-372; these read DLNY…PNCE and AEHA…PTCS. Residues 374–410 enclose the EGF-like 5; calcium-binding domain; the sequence is NIDDCSPNNCSHGGTCQDLVNGFKCVCPPQWTGKTCQ. N-linked (GlcNAc...) asparagine glycosylation is present at Asn-382. Positions 412-448 constitute an EGF-like 6; calcium-binding domain; that stretch reads DANECEAKPCVNARSCKNLIASYYCDCLPGWMGQNCD. One can recognise an EGF-like 7; calcium-binding domain in the interval 450 to 485; it reads NINDCLGQCQNDASCRDLVNGYRCICPPGYAGDHCE. Residues 487-523 enclose the EGF-like 8; calcium-binding domain; that stretch reads DIDECASNPCLNGGHCQNEINRFQCLCPTGFSGNLCQ. 2 EGF-like domains span residues 525-561 and 586-627; these read DIDY…KNCS and DTPE…TYCH. N-linked (GlcNAc...) asparagine glycosylation is present at Asn-559. The region spanning 629–665 is the EGF-like 11; calcium-binding domain; it reads NINDCESNPCKNGGTCIDGVNSYKCICSDGWEGAHCE. Residues 667-703 enclose the EGF-like 12; calcium-binding domain; sequence NINDCSQNPCHYGGTCRDLVNDFYCDCKNGWKGKTCH. EGF-like domains are found at residues 705-741 and 744-780; these read RDSQ…TTCN and RNSS…PICT. N-linked (GlcNAc...) asparagine glycosylation occurs at Asn-745. 9 cysteine pairs are disulfide-bonded: Cys-748–Cys-759, Cys-753–Cys-768, Cys-770–Cys-779, Cys-786–Cys-797, Cys-791–Cys-806, Cys-808–Cys-817, Cys-824–Cys-835, Cys-829–Cys-844, and Cys-846–Cys-855. Residues 782–818 enclose the EGF-like 15; calcium-binding domain; that stretch reads NTNDCSPHPCYNSGTCVDGDNWYRCECAPGFAGPDCR. In terms of domain architecture, EGF-like 16; calcium-binding spans 820–856; it reads NINECQSSPCAFGATCVDEINGYQCICPPGHSGAKCH. 4 N-linked (GlcNAc...) asparagine glycosylation sites follow: Asn-960, Asn-991, Asn-1045, and Asn-1064. Residues 1068 to 1093 traverse the membrane as a helical segment; that stretch reads FLVPLLSSVLTVAWVCCLVTAFYWCV. Residues 1094–1218 are Cytoplasmic-facing; the sequence is RKRRKPSSHT…QSLNRMEYIV (125 aa). The segment at 1181–1218 is disordered; the sequence is REEKAPSGTPTKHPNWTNKQDNRDLESAQSLNRMEYIV. Over residues 1188–1199 the composition is skewed to polar residues; sequence GTPTKHPNWTNK.

In terms of assembly, interacts with NOTCH1, NOTCH2 and NOTCH3. In terms of tissue distribution, widely expressed in many tissues, with highest expression in brain, heart, muscle and thymus.

It is found in the membrane. Its subcellular location is the cell membrane. Functionally, ligand for multiple Notch receptors and involved in the mediation of Notch signaling. May be involved in cell-fate decisions during hematopoiesis. Seems to be involved in early and late stages of mammalian cardiovascular development. Inhibits myoblast differentiation. May regulate fibroblast growth factor-induced angiogenesis. The protein is Protein jagged-1 (Jag1) of Mus musculus (Mouse).